The primary structure comprises 123 residues: Probable U6 snRNA-associated Sm-like protein LSm4 (123 aa).

Positions 3–76 constitute a Sm domain; the sequence is LPLSLLKTAQ…IKYLRIPETV (74 aa). A compositionally biased stretch (basic and acidic residues) spans 85 to 97; sequence NEVRRQQQREQSR. Positions 85–123 are disordered; it reads NEVRRQQQREQSRGRGGGRGGRGGHRGGGGNRGGRGGAR. The span at 98–123 shows a compositional bias: gly residues; the sequence is GRGGGRGGRGGHRGGGGNRGGRGGAR.

This sequence belongs to the snRNP Sm proteins family. As to quaternary structure, component of the precatalytic spliceosome (spliceosome B complex). Component of the U4/U6-U5 tri-snRNP complex, a building block of the precatalytic spliceosome (spliceosome B complex). LSM2, LSM3, LSM4, LSM5, LSM6, LSM7 and LSM8 form a heptameric, ring-shaped subcomplex (the LSM2-8 complex) that is part of the U4/U6-U5 tri-snRNP complex and the precatalytic spliceosome.

The protein resides in the nucleus. Functionally, plays a role in pre-mRNA splicing as component of the U4/U6-U5 tri-snRNP complex that is involved in spliceosome assembly, and as component of the precatalytic spliceosome (spliceosome B complex). The heptameric LSM2-8 complex binds specifically to the 3'-terminal U-tract of U6 snRNA. The chain is Probable U6 snRNA-associated Sm-like protein LSm4 (lsm-4) from Caenorhabditis elegans.